Here is an 84-residue protein sequence, read N- to C-terminus: UPF0457 protein BALH_2270 (84 aa).

The protein belongs to the UPF0457 family.

The protein is UPF0457 protein BALH_2270 of Bacillus thuringiensis (strain Al Hakam).